Consider the following 128-residue polypeptide: Early E3 14.5 kDa protein (128 aa).

The protein belongs to the adenoviridae E3_15 family.

Its function is as follows. Protects virus-infected cells from TNF-induced cytolysis. This is Early E3 14.5 kDa protein from Human adenovirus C serotype 5 (HAdV-5).